The sequence spans 360 residues: Fructose-bisphosphate aldolase 1 (360 aa).

S63 provides a ligand contact to D-glyceraldehyde 3-phosphate. D110 (proton donor) is an active-site residue. Residues H111, D145, E175, and H227 each coordinate Zn(2+). G228 is a dihydroxyacetone phosphate binding site. Position 266 (H266) interacts with Zn(2+). A dihydroxyacetone phosphate-binding site is contributed by G267–S269.

This sequence belongs to the class II fructose-bisphosphate aldolase family. Homodimer. It depends on Zn(2+) as a cofactor.

The catalysed reaction is beta-D-fructose 1,6-bisphosphate = D-glyceraldehyde 3-phosphate + dihydroxyacetone phosphate. The protein operates within carbohydrate degradation; glycolysis; D-glyceraldehyde 3-phosphate and glycerone phosphate from D-glucose: step 4/4. In terms of biological role, catalyzes the aldol condensation of dihydroxyacetone phosphate (DHAP or glycerone-phosphate) with glyceraldehyde 3-phosphate (G3P) to form fructose 1,6-bisphosphate (FBP) in gluconeogenesis and the reverse reaction in glycolysis. This chain is Fructose-bisphosphate aldolase 1 (FBA1), found in Paracoccidioides lutzii (strain ATCC MYA-826 / Pb01) (Paracoccidioides brasiliensis).